The following is a 72-amino-acid chain: High-potential iron-sulfur protein isozyme 1 (72 aa).

Ala1 is subject to N-carbamoylalanine; partial. [4Fe-4S] cluster-binding residues include Cys34, Cys37, Cys51, and Cys65.

It belongs to the high-potential iron-sulfur protein (HiPIP) family. Homodimer.

In terms of biological role, specific class of high-redox-potential 4Fe-4S ferredoxins. Functions in anaerobic electron transport in most purple and in some other photosynthetic bacteria and in at least one genus (Paracoccus) of halophilic, denitrifying bacteria. The protein is High-potential iron-sulfur protein isozyme 1 of Ectothiorhodospira mobilis.